Consider the following 228-residue polypeptide: PKHD-type hydroxylase XAC2942 (228 aa).

The region spanning 78-180 (RIYPPLFNRY…RVACFFWAQS (103 aa)) is the Fe2OG dioxygenase domain. Fe cation-binding residues include histidine 96, aspartate 98, and histidine 161. Residue arginine 171 participates in 2-oxoglutarate binding.

Fe(2+) serves as cofactor. L-ascorbate is required as a cofactor.

In Xanthomonas axonopodis pv. citri (strain 306), this protein is PKHD-type hydroxylase XAC2942.